Here is a 153-residue protein sequence, read N- to C-terminus: 3-hydroxyacyl-[acyl-carrier-protein] dehydratase FabZ (153 aa).

His-57 is a catalytic residue.

The protein belongs to the thioester dehydratase family. FabZ subfamily.

Its subcellular location is the cytoplasm. It catalyses the reaction a (3R)-hydroxyacyl-[ACP] = a (2E)-enoyl-[ACP] + H2O. In terms of biological role, involved in unsaturated fatty acids biosynthesis. Catalyzes the dehydration of short chain beta-hydroxyacyl-ACPs and long chain saturated and unsaturated beta-hydroxyacyl-ACPs. The sequence is that of 3-hydroxyacyl-[acyl-carrier-protein] dehydratase FabZ from Vibrio cholerae serotype O1 (strain ATCC 39315 / El Tor Inaba N16961).